An 817-amino-acid polypeptide reads, in one-letter code: DNA mismatch repair protein MutS (817 aa).

604–611 (GPNMSGKS) lines the ATP pocket.

It belongs to the DNA mismatch repair MutS family.

Its function is as follows. This protein is involved in the repair of mismatches in DNA. It is possible that it carries out the mismatch recognition step. This protein has a weak ATPase activity. In Petrotoga mobilis (strain DSM 10674 / SJ95), this protein is DNA mismatch repair protein MutS.